The sequence spans 539 residues: Glucose-6-phosphate isomerase (539 aa).

The active-site Proton donor is Glu340. Active-site residues include His371 and Lys500.

It belongs to the GPI family.

The protein localises to the cytoplasm. It carries out the reaction alpha-D-glucose 6-phosphate = beta-D-fructose 6-phosphate. Its pathway is carbohydrate biosynthesis; gluconeogenesis. It functions in the pathway carbohydrate degradation; glycolysis; D-glyceraldehyde 3-phosphate and glycerone phosphate from D-glucose: step 2/4. Its function is as follows. Catalyzes the reversible isomerization of glucose-6-phosphate to fructose-6-phosphate. The polypeptide is Glucose-6-phosphate isomerase (Ruegeria pomeroyi (strain ATCC 700808 / DSM 15171 / DSS-3) (Silicibacter pomeroyi)).